The sequence spans 190 residues: Probable RNA-binding protein 18 (190 aa).

The region spanning 25–106 (HRLWIGNVDP…KKLVVRWAHA (82 aa)) is the RRM domain.

The sequence is that of Probable RNA-binding protein 18 (rbm18) from Xenopus laevis (African clawed frog).